Here is an 861-residue protein sequence, read N- to C-terminus: Valine--tRNA ligase (861 aa).

A 'HIGH' region motif is present at residues 42–52 (PNITGRIHMGH). A 'KMSKS' region motif is present at residues 521–525 (KMSKS). ATP is bound at residue lysine 524. The stretch at 792-861 (VAGLNLQSEI…ILNQILGDLM (70 aa)) forms a coiled coil.

This sequence belongs to the class-I aminoacyl-tRNA synthetase family. ValS type 1 subfamily. Monomer.

The protein localises to the cytoplasm. It catalyses the reaction tRNA(Val) + L-valine + ATP = L-valyl-tRNA(Val) + AMP + diphosphate. Catalyzes the attachment of valine to tRNA(Val). As ValRS can inadvertently accommodate and process structurally similar amino acids such as threonine, to avoid such errors, it has a 'posttransfer' editing activity that hydrolyzes mischarged Thr-tRNA(Val) in a tRNA-dependent manner. This chain is Valine--tRNA ligase, found in Pseudothermotoga lettingae (strain ATCC BAA-301 / DSM 14385 / NBRC 107922 / TMO) (Thermotoga lettingae).